The following is an 84-amino-acid chain: uncharacterized protein (84 aa).

In terms of domain architecture, LITAF spans 1 to 83 (MDDKFTTLPC…CKQAVFVYKI (83 aa)). Positions 21 and 24 each coordinate Zn(2+). Residues 39–61 (MSWVVCTAITLACLPCCCIPFLC) are membrane-binding amphipathic helix. Positions 71 and 74 each coordinate Zn(2+).

It localises to the host membrane. This is an uncharacterized protein from Dryophytes versicolor (chameleon treefrog).